Reading from the N-terminus, the 148-residue chain is Hemoglobin subunit beta-2 (148 aa).

The Globin domain maps to 3–148 (EWTDAERTAI…VVSALCRQYH (146 aa)). Residues His64 and His93 each contribute to the heme b site.

As to quaternary structure, heterotetramer of two alpha chains and two beta chains. As to expression, red blood cells.

Its function is as follows. Involved in oxygen transport from gills to the various peripheral tissues. This is Hemoglobin subunit beta-2 (ba2) from Danio rerio (Zebrafish).